Consider the following 93-residue polypeptide: Pancreatic polypeptide prohormone (93 aa).

The N-terminal stretch at 1–29 (MPAACRCLFLLLLSACVALLLQPPLGTRG) is a signal peptide. A Tyrosine amide modification is found at Tyr65. A propeptide spanning residues 89–93 (ELMDE) is cleaved from the precursor.

This sequence belongs to the NPY family.

The protein resides in the secreted. Functionally, hormone secreted by pancreatic cells that acts as a regulator of pancreatic and gastrointestinal functions probably by signaling through the G protein-coupled receptor NPY4R2. The sequence is that of Pancreatic polypeptide prohormone (PPY) from Canis lupus familiaris (Dog).